We begin with the raw amino-acid sequence, 253 residues long: RAD51-associated protein 1 (253 aa).

Residues 32–51 (APLTKKSRTQPKEPKKENKK) form an interaction with DNA region. 3 disordered regions span residues 33–74 (PLTK…TSLD), 141–169 (DREH…EGND), and 184–244 (KKIK…WVPP). Over residues 154-169 (PDEESEEDSDYREGND) the composition is skewed to acidic residues. Residues 184 to 195 (KKIKRQTRKEKK) show a composition bias toward basic residues. Residues 190–241 (TRKEKKTPKSENNTTVMELKSEQTQKMMSTSSEPVGRPLYTSSPVTNKKPKW) form an interaction with DNA region. A compositionally biased stretch (polar residues) spans 199 to 222 (SENNTTVMELKSEQTQKMMSTSSE).

Monomer.

The protein resides in the chromosome. Its subcellular location is the nucleus. Functionally, structure-specific DNA-binding protein involved in DNA repair by promoting RAD51-mediated homologous recombination. Acts by stimulating D-Loop formation by RAD51: specifically enhances joint molecule formation through its structure-specific DNA interaction and its interaction with RAD51. Binds single-stranded DNA (ssDNA), double-stranded DNA (dsDNA) and secondary DNA structures, such as D-loop structures: has a strong preference for branched-DNA structures that are obligatory intermediates during joint molecule formation. Involved in mitotic recombination-dependent replication fork processing. Also involved in meiosis by promoting DMC1-mediated homologous meiotic recombination. This chain is RAD51-associated protein 1, found in Gallus gallus (Chicken).